Consider the following 261-residue polypeptide: UPF0246 protein Rmet_0978 (261 aa).

It belongs to the UPF0246 family.

In Cupriavidus metallidurans (strain ATCC 43123 / DSM 2839 / NBRC 102507 / CH34) (Ralstonia metallidurans), this protein is UPF0246 protein Rmet_0978.